Consider the following 166-residue polypeptide: 16S rRNA aminocarboxypropyltransferase (166 aa).

Residues T17, V62, I84, Y99, and S103 each contribute to the S-adenosyl-L-methionine site.

This sequence belongs to the TDD superfamily. TSR3 family.

The protein resides in the cytoplasm. The enzyme catalyses an N(1)-methylpseudouridine in rRNA + S-adenosyl-L-methionine = N(1)-methyl-N(3)-[(3S)-3-amino-3-carboxypropyl]pseudouridine in rRNA + S-methyl-5'-thioadenosine + H(+). Its function is as follows. Aminocarboxypropyltransferase that catalyzes the aminocarboxypropyl transfer on pseudouridine corresponding to position 914 in M.jannaschii 16S rRNA. It constitutes the last step in biosynthesis of the hypermodified N1-methyl-N3-(3-amino-3-carboxypropyl) pseudouridine (m1acp3-Psi). This chain is 16S rRNA aminocarboxypropyltransferase, found in Saccharolobus solfataricus (strain ATCC 35092 / DSM 1617 / JCM 11322 / P2) (Sulfolobus solfataricus).